Reading from the N-terminus, the 237-residue chain is Phosphoribosylaminoimidazole-succinocarboxamide synthase (237 aa).

This sequence belongs to the SAICAR synthetase family.

The catalysed reaction is 5-amino-1-(5-phospho-D-ribosyl)imidazole-4-carboxylate + L-aspartate + ATP = (2S)-2-[5-amino-1-(5-phospho-beta-D-ribosyl)imidazole-4-carboxamido]succinate + ADP + phosphate + 2 H(+). It participates in purine metabolism; IMP biosynthesis via de novo pathway; 5-amino-1-(5-phospho-D-ribosyl)imidazole-4-carboxamide from 5-amino-1-(5-phospho-D-ribosyl)imidazole-4-carboxylate: step 1/2. In Methanosarcina mazei (strain ATCC BAA-159 / DSM 3647 / Goe1 / Go1 / JCM 11833 / OCM 88) (Methanosarcina frisia), this protein is Phosphoribosylaminoimidazole-succinocarboxamide synthase.